Here is a 341-residue protein sequence, read N- to C-terminus: tRNA N6-adenosine threonylcarbamoyltransferase (341 aa).

Residues His-115 and His-119 each contribute to the Fe cation site. Substrate contacts are provided by residues 138–142, Asp-171, Gly-184, and Asn-276; that span reads LVSGG. Fe cation is bound at residue Asp-304.

This sequence belongs to the KAE1 / TsaD family. It depends on Fe(2+) as a cofactor.

It localises to the cytoplasm. It carries out the reaction L-threonylcarbamoyladenylate + adenosine(37) in tRNA = N(6)-L-threonylcarbamoyladenosine(37) in tRNA + AMP + H(+). In terms of biological role, required for the formation of a threonylcarbamoyl group on adenosine at position 37 (t(6)A37) in tRNAs that read codons beginning with adenine. Is involved in the transfer of the threonylcarbamoyl moiety of threonylcarbamoyl-AMP (TC-AMP) to the N6 group of A37, together with TsaE and TsaB. TsaD likely plays a direct catalytic role in this reaction. This chain is tRNA N6-adenosine threonylcarbamoyltransferase, found in Stenotrophomonas maltophilia (strain K279a).